The following is a 245-amino-acid chain: DNA polymerase sliding clamp 2 (245 aa).

This sequence belongs to the PCNA family. In terms of assembly, forms homodimers with PCNA1, which then recruit PCNA3; does not form homotrimers. The heterodimers interact with RfcS homotetramers. Heterotrimer which circularizes head-to-tail (head is at N-terminus, tail is at C-terminus) to form a toroid; DNA passes through its center. Replication factor C (RFC) is required to load the toroid on the DNA. This subunit interacts with DNA polymerase I (dpo1). The heterotrimer also interacts with flap endonuclease 1, DNA ligase and XPF via the other subunits.

Functionally, one of the sliding clamp subunits that acts as a moving platform for DNA processing. Responsible for tethering the catalytic subunit of DNA polymerase to DNA during high-speed replication. Heterotrimer stimulates the Holliday junction resolvase Hjc. DNA polymerase I, DNA ligase and the flap endonuclease may be constitutively associated with the PCNA heterotrimer forming a scanning complex able to couple DNA synthesis and Okazaki fragment maturation. This chain is DNA polymerase sliding clamp 2, found in Saccharolobus solfataricus (strain ATCC 35092 / DSM 1617 / JCM 11322 / P2) (Sulfolobus solfataricus).